A 466-amino-acid chain; its full sequence is Histidine--tRNA ligase (466 aa).

The protein belongs to the class-II aminoacyl-tRNA synthetase family. Homodimer.

It is found in the cytoplasm. It catalyses the reaction tRNA(His) + L-histidine + ATP = L-histidyl-tRNA(His) + AMP + diphosphate + H(+). The protein is Histidine--tRNA ligase of Xylella fastidiosa (strain M23).